The chain runs to 165 residues: Large ribosomal subunit protein uL15 (165 aa).

The segment covering 1–29 (MTSKKKRQRGSRTHGGGSHKNRRGAGHRG) has biased composition (basic residues). Disordered stretches follow at residues 1 to 59 (MTSK…QKVQ) and 133 to 165 (KVEGAGGSVELTDLGEERQAEAEETEDADADEE). Over residues 30–47 (GRGDAGRDKHEFHNHEPL) the composition is skewed to basic and acidic residues. The segment covering 154–165 (AEETEDADADEE) has biased composition (acidic residues).

It belongs to the universal ribosomal protein uL15 family. Part of the 50S ribosomal subunit. Interacts weakly with proteins L18e and L32e.

Functionally, binds to the 23S rRNA. This is Large ribosomal subunit protein uL15 (rpl15) from Haloarcula marismortui (strain ATCC 43049 / DSM 3752 / JCM 8966 / VKM B-1809) (Halobacterium marismortui).